We begin with the raw amino-acid sequence, 629 residues long: 1-deoxy-D-xylulose-5-phosphate synthase (629 aa).

Thiamine diphosphate is bound by residues histidine 72 and 113–115; that span reads GHA. Aspartate 144 is a Mg(2+) binding site. Thiamine diphosphate contacts are provided by residues 145 to 146, asparagine 174, tyrosine 287, and glutamate 370; that span reads GA. A Mg(2+)-binding site is contributed by asparagine 174.

This sequence belongs to the transketolase family. DXPS subfamily. In terms of assembly, homodimer. Mg(2+) serves as cofactor. Thiamine diphosphate is required as a cofactor.

It catalyses the reaction D-glyceraldehyde 3-phosphate + pyruvate + H(+) = 1-deoxy-D-xylulose 5-phosphate + CO2. Its pathway is metabolic intermediate biosynthesis; 1-deoxy-D-xylulose 5-phosphate biosynthesis; 1-deoxy-D-xylulose 5-phosphate from D-glyceraldehyde 3-phosphate and pyruvate: step 1/1. Functionally, catalyzes the acyloin condensation reaction between C atoms 2 and 3 of pyruvate and glyceraldehyde 3-phosphate to yield 1-deoxy-D-xylulose-5-phosphate (DXP). This is 1-deoxy-D-xylulose-5-phosphate synthase from Prochlorococcus marinus (strain MIT 9312).